Here is a 285-residue protein sequence, read N- to C-terminus: N-alpha-acetyltransferase 40 (285 aa).

An N-acetyltransferase domain is found at I88–D274. Substrate is bound by residues Y116, T163–E165, and Y185. Residues V187–V189 and G195–R200 each bind acetyl-CoA. Position 228 (T228) interacts with substrate. Acetyl-CoA is bound at residue N233.

This sequence belongs to the acetyltransferase family. NAA40 subfamily.

The protein resides in the nucleus. Its subcellular location is the cytoplasm. The catalysed reaction is N-terminal L-seryl-[histone H4] + acetyl-CoA = N-terminal N(alpha)-acetyl-L-seryl-[histone H4] + CoA + H(+). It carries out the reaction N-terminal L-seryl-[histone H2A] + acetyl-CoA = N-terminal N(alpha)-acetyl-L-seryl-[histone H2A] + CoA + H(+). In terms of biological role, N-alpha-acetyltransferase that specifically mediates the acetylation of the N-terminal residues of histones H4 and H2A. In Saccharomyces cerevisiae (strain ATCC 204508 / S288c) (Baker's yeast), this protein is N-alpha-acetyltransferase 40.